A 95-amino-acid polypeptide reads, in one-letter code: Ferredoxin-like protein FixX (95 aa).

Belongs to the bacterial-type ferredoxin family. FixX subfamily.

Functionally, could be part of an electron transfer system required for anaerobic carnitine reduction. Could be a 3Fe-4S cluster-containing protein. The protein is Ferredoxin-like protein FixX (fixX) of Shigella flexneri.